Here is a 63-residue protein sequence, read N- to C-terminus: Frenatin 1.1 (63 aa).

The N-terminal stretch at 1-22 (MAFLKKSLFLVLFLGLVSLSIC) is a signal peptide. Positions 23–49 (EKEKKEQEDEDENEEEKESEEGSEEKR) are excised as a propeptide. Residues 25 to 63 (EKKEQEDEDENEEEKESEEGSEEKRGLLDTLGGILGLGR) form a disordered region. Over residues 30 to 45 (EDEDENEEEKESEEGS) the composition is skewed to acidic residues. At L61 the chain carries Leucine amide.

In terms of tissue distribution, expressed by the skin glands.

It is found in the secreted. In terms of biological role, antimicrobial peptide with selective activity. Is only active against Micrococcus luteus (MIC=25 ug/ml) and not against Bacillus cereus, Escherichia coli, Leuconostoc mesenteroides, Micrococcus luteus, Pastewella haemolytica, Staphylococcus aureus, Streptococcus faecalis and Streptococcus uberis. The polypeptide is Frenatin 1.1 (Nyctimystes infrafrenatus (White-lipped tree frog)).